The following is a 275-amino-acid chain: Autophagy protein 5 (275 aa).

At Met-1 the chain carries N-acetylmethionine. A Glycyl lysine isopeptide (Lys-Gly) (interchain with G-Cter in ATG12) cross-link involves residue Lys-130.

This sequence belongs to the ATG5 family. Forms a conjugate with ATG12. Part of the minor complex composed of 4 sets of ATG12-ATG5 and ATG16L1 (400 kDa); this complex interacts with ATG3 leading to disruption of ATG7 interaction and promotion of ATG8-like proteins lipidation. Forms an 800-kDa complex composed of ATG12-ATG5 and ATG16L2. The ATG12-ATG5 conjugate interacts with RAB33A; this interaction is bridged by ATG16L1 and promotes ATG12-ATG5-ATG16L1 complex recruitment to phagophores. Interacts with TECPR1; the interaction is direct and does not take place when ATG16L1 is associated with the ATG5-ATG12 conjugate. Interacts with DHX58/RIG-1, IFIH1/MDA5 and MAVS/IPS-1 in monomeric form as well as in ATG12-ATG5 conjugate form. The interaction with MAVS is further enhanced upon vesicular stomatitis virus (VSV) infection. Interacts with ATG3. Interacts with ATG7 and ATG10. Interacts with FADD. Interacts with Bassoon/BSN; this interaction is important for the regulation of presynaptic autophagy. Interacts with ATG16L2. Conjugated to ATG12; which is essential for autophagy, but is not required for association with isolation membrane. In terms of processing, acetylated by EP300.

The protein localises to the cytoplasm. The protein resides in the preautophagosomal structure membrane. Its function is as follows. Involved in autophagic vesicle formation. Conjugation with ATG12, through a ubiquitin-like conjugating system involving ATG7 as an E1-like activating enzyme and ATG10 as an E2-like conjugating enzyme, is essential for its function. The ATG12-ATG5 conjugate acts as an E3-like enzyme which is required for lipidation of ATG8 family proteins and their association to the vesicle membranes. Involved in mitochondrial quality control after oxidative damage, and in subsequent cellular longevity. Plays a critical role in multiple aspects of lymphocyte development and is essential for both B and T lymphocyte survival and proliferation. Required for optimal processing and presentation of antigens for MHC II. Involved in the maintenance of axon morphology and membrane structures, as well as in normal adipocyte differentiation. Promotes primary ciliogenesis through removal of OFD1 from centriolar satellites and degradation of IFT20 via the autophagic pathway. As part of the ATG8 conjugation system with ATG12 and ATG16L1, required for recruitment of LRRK2 to stressed lysosomes and induction of LRRK2 kinase activity in response to lysosomal stress. In terms of biological role, may play an important role in the apoptotic process, possibly within the modified cytoskeleton. Its expression is a relatively late event in the apoptotic process, occurring downstream of caspase activity. Plays a crucial role in IFN-gamma-induced autophagic cell death by interacting with FADD. The protein is Autophagy protein 5 of Bos taurus (Bovine).